The sequence spans 118 residues: MSEFAPICIYLVISLLVCLIPLGVPFLFASNGSTYPEKLSAYECGFDPFGDARSRFDIRFYLVSILFIIFDLEVTFFFPWAVSLNKIDLFGFWSMMVFLLILTIGFLYEWKKGALDWE.

3 helical membrane-spanning segments follow: residues 9–29, 62–82, and 87–107; these read IYLV…FLFA, LVSI…PWAV, and IDLF…IGFL.

Belongs to the complex I subunit 3 family.

It is found in the mitochondrion membrane. It carries out the reaction a ubiquinone + NADH + 5 H(+)(in) = a ubiquinol + NAD(+) + 4 H(+)(out). Core subunit of the mitochondrial membrane respiratory chain NADH dehydrogenase (Complex I) that is believed to belong to the minimal assembly required for catalysis. Complex I functions in the transfer of electrons from NADH to the respiratory chain. The immediate electron acceptor for the enzyme is believed to be ubiquinone. This chain is NADH-ubiquinone oxidoreductase chain 3 (NAD3), found in Pinus sylvestris (Scotch pine).